Consider the following 955-residue polypeptide: MDPDPQAGVQVGMRVVRGVDWKWGQQDGGEGGVGTVVELGRHGSPSTPDRTVVVQWDQGTRTNYRAGYQGAHDLLLYDNAQIGVRHPNIICDCCKKHGLRGMRWKCRVCLDYDLCTQCYMHNKHELAHAFDRYETAHSRPVTLSPRQGLPRIPLRGIFQGAKVVRGPDWEWGSQDGGEGKPGRVVDIRGWDVETGRSVASVTWADGTTNVYRVGHKGKVDLKCVGEAAGGFYYKDHLPRLGKPAELQRRVSADSQPFQHGDKVKCLLDTDVLREMQEGHGGWNPRMAEFIGQTGTVHRITDRGDVRVQFNHETRWTFHPGALTKHHSFWVGDVVRVIGDLDTVKRLQAGHGEWTDDMAPALGRVGKVVKVFGDGNLRVAVAGQRWTFSPSCLVAYRPEEDANLDVAERARENKSSLSVALDKLRAQKSDPEHPGRLVVEVALGNAARALDLLRRRPEQVDTKNQGRTALQVAAYLGQVELIRLLLQARAGVDLPDDEGNTALHYAALGNQPEATRVLLSAGCRADAINSTQSTALHVAVQRGFLEVVRALCERGCDVNLPDAHSDTPLHSAISAGTGASGIVEVLTEVPNIDVTATNSQGFTLLHHASLKGHALAVRKILARARQLVDAKKEDGFTALHLAALNNHREVAQILIREGRCDVNVRNRKLQSPLHLAVQQAHVGLVPLLVDAGCSVNAEDEEGDTALHVALQRHQLLPLVADGAGGDPGPLQLLSRLQASGLPGSAELTVGAAVACFLALEGADVSYTNHRGRSPLDLAAEGRVLKALQGCAQRFRERQAGGGAAPGPRQTLGTPNTVTNLHVGAAPGPEAAECLVCSELALLVLFSPCQHRTVCEECARRMKKCIRCQVVVSKKLRPDGSEVASAAPAPGPPRQLVEELQSRYRQMEERITCPICIDSHIRLVFQCGHGACAPCGSALSACPICRQPIRDRIQIFV.

Residue Met-1 is modified to N-acetylmethionine. The MIB/HERC2 1 domain maps to 1–80; it reads MDPDPQAGVQ…AHDLLLYDNA (80 aa). The ZZ-type zinc finger occupies 86-138; that stretch reads HPNIICDCCKKHGLRGMRWKCRVCLDYDLCTQCYMHNKHELAHAFDRYETAHS. Positions 91, 94, 106, 109, 115, 118, 124, and 128 each coordinate Zn(2+). Residues 149–227 enclose the MIB/HERC2 2 domain; that stretch reads LPRIPLRGIF…KVDLKCVGEA (79 aa). Ser-251 carries the post-translational modification Phosphoserine. 9 ANK repeats span residues 464-493, 497-526, 530-559, 563-595, 599-628, 633-663, 667-696, 700-728, and 769-798; these read QGRT…GVDL, EGNT…RADA, TQST…DVNL, HSDT…DVTA, QGFT…QLVD, DGFT…DVNV, KLQS…SVNA, EGDT…DPGP, and RGRS…ERQA. 2 RING-type zinc fingers span residues 832–867 and 911–944; these read CLVC…IRCQ and CPIC…PICR.

As to quaternary structure, interacts with actin monomer. Post-translationally, ubiquitinated. Possibly via autoubiquitination. As to expression, expressed in skeletal muscle, and to a lesser extent in heart, brain and kidney.

It localises to the cytoplasm. It is found in the endosome. The enzyme catalyses S-ubiquitinyl-[E2 ubiquitin-conjugating enzyme]-L-cysteine + [acceptor protein]-L-lysine = [E2 ubiquitin-conjugating enzyme]-L-cysteine + N(6)-ubiquitinyl-[acceptor protein]-L-lysine.. It functions in the pathway protein modification; protein ubiquitination. Functionally, E3 ubiquitin-protein ligase that mediates ubiquitination of Delta receptors, which act as ligands of Notch proteins. Positively regulates the Delta-mediated Notch signaling by ubiquitinating the intracellular domain of Delta, leading to endocytosis of Delta receptors. The polypeptide is E3 ubiquitin-protein ligase MIB2 (Homo sapiens (Human)).